The following is a 600-amino-acid chain: NADH-quinone oxidoreductase subunit C/D (600 aa).

The interval 1-190 (MIDLMPKKNT…EPFFLNEQKE (190 aa)) is NADH dehydrogenase I subunit C. The tract at residues 214–600 (EFMFLNLGPN…IDFVMSDVDR (387 aa)) is NADH dehydrogenase I subunit D.

This sequence in the N-terminal section; belongs to the complex I 30 kDa subunit family. It in the C-terminal section; belongs to the complex I 49 kDa subunit family. In terms of assembly, NDH-1 is composed of 13 different subunits. Subunits NuoB, CD, E, F, and G constitute the peripheral sector of the complex.

The protein localises to the cell inner membrane. It carries out the reaction a quinone + NADH + 5 H(+)(in) = a quinol + NAD(+) + 4 H(+)(out). In terms of biological role, NDH-1 shuttles electrons from NADH, via FMN and iron-sulfur (Fe-S) centers, to quinones in the respiratory chain. The immediate electron acceptor for the enzyme in this species is believed to be ubiquinone. Couples the redox reaction to proton translocation (for every two electrons transferred, four hydrogen ions are translocated across the cytoplasmic membrane), and thus conserves the redox energy in a proton gradient. The chain is NADH-quinone oxidoreductase subunit C/D from Buchnera aphidicola subsp. Acyrthosiphon pisum (strain APS) (Acyrthosiphon pisum symbiotic bacterium).